The sequence spans 198 residues: Imidazoleglycerol-phosphate dehydratase (198 aa).

Belongs to the imidazoleglycerol-phosphate dehydratase family.

It is found in the cytoplasm. It catalyses the reaction D-erythro-1-(imidazol-4-yl)glycerol 3-phosphate = 3-(imidazol-4-yl)-2-oxopropyl phosphate + H2O. It functions in the pathway amino-acid biosynthesis; L-histidine biosynthesis; L-histidine from 5-phospho-alpha-D-ribose 1-diphosphate: step 6/9. This chain is Imidazoleglycerol-phosphate dehydratase, found in Herminiimonas arsenicoxydans.